The sequence spans 215 residues: NAD(P)H-hydrate epimerase (215 aa).

Residues 10 to 211 form the YjeF N-terminal domain; sequence AQRYDAHATN…DIGIYAQDRV (202 aa). 58–62 lines the (6S)-NADPHX pocket; sequence NNGGD. K(+)-binding residues include Asn-59 and Asp-121. (6S)-NADPHX-binding positions include 125–131 and Asp-154; that span reads GVGLTRD. Residue Ser-157 participates in K(+) binding.

The protein belongs to the NnrE/AIBP family. It depends on K(+) as a cofactor.

The catalysed reaction is (6R)-NADHX = (6S)-NADHX. It carries out the reaction (6R)-NADPHX = (6S)-NADPHX. Catalyzes the epimerization of the S- and R-forms of NAD(P)HX, a damaged form of NAD(P)H that is a result of enzymatic or heat-dependent hydration. This is a prerequisite for the S-specific NAD(P)H-hydrate dehydratase to allow the repair of both epimers of NAD(P)HX. The sequence is that of NAD(P)H-hydrate epimerase from Levilactobacillus brevis (strain ATCC 367 / BCRC 12310 / CIP 105137 / JCM 1170 / LMG 11437 / NCIMB 947 / NCTC 947) (Lactobacillus brevis).